A 79-amino-acid polypeptide reads, in one-letter code: Acyl carrier protein (79 aa).

Residues 2-77 (SEIGERVKKI…DATKFLEKNA (76 aa)) form the Carrier domain. Position 37 is an O-(pantetheine 4'-phosphoryl)serine (serine 37).

It belongs to the acyl carrier protein (ACP) family. 4'-phosphopantetheine is transferred from CoA to a specific serine of apo-ACP by AcpS. This modification is essential for activity because fatty acids are bound in thioester linkage to the sulfhydryl of the prosthetic group.

The protein resides in the cytoplasm. The protein operates within lipid metabolism; fatty acid biosynthesis. Its function is as follows. Carrier of the growing fatty acid chain in fatty acid biosynthesis. In Nitrobacter hamburgensis (strain DSM 10229 / NCIMB 13809 / X14), this protein is Acyl carrier protein.